We begin with the raw amino-acid sequence, 456 residues long: Bifunctional protein GlmU (456 aa).

The interval 1–229 (MSNRPMSVVI…TTETDGVNNR (229 aa)) is pyrophosphorylase. UDP-N-acetyl-alpha-D-glucosamine-binding positions include 11-14 (LAAG), Lys-25, Gln-76, 81-82 (GT), 103-105 (YGD), Gly-140, Glu-154, Asn-169, and Asn-227. Asp-105 provides a ligand contact to Mg(2+). Asn-227 provides a ligand contact to Mg(2+). The tract at residues 230–250 (LQLATLERVYQAEQAEKLLLS) is linker. The N-acetyltransferase stretch occupies residues 251 to 456 (GVMLQDPARF…ASWQRPQKKK (206 aa)). UDP-N-acetyl-alpha-D-glucosamine contacts are provided by Arg-333 and Lys-351. Residue His-363 is the Proton acceptor of the active site. 2 residues coordinate UDP-N-acetyl-alpha-D-glucosamine: Tyr-366 and Asn-377. Residues Ala-380, 386-387 (NY), Ser-405, Ala-423, and Arg-440 each bind acetyl-CoA.

It in the N-terminal section; belongs to the N-acetylglucosamine-1-phosphate uridyltransferase family. The protein in the C-terminal section; belongs to the transferase hexapeptide repeat family. In terms of assembly, homotrimer. It depends on Mg(2+) as a cofactor.

It is found in the cytoplasm. The catalysed reaction is alpha-D-glucosamine 1-phosphate + acetyl-CoA = N-acetyl-alpha-D-glucosamine 1-phosphate + CoA + H(+). It carries out the reaction N-acetyl-alpha-D-glucosamine 1-phosphate + UTP + H(+) = UDP-N-acetyl-alpha-D-glucosamine + diphosphate. It functions in the pathway nucleotide-sugar biosynthesis; UDP-N-acetyl-alpha-D-glucosamine biosynthesis; N-acetyl-alpha-D-glucosamine 1-phosphate from alpha-D-glucosamine 6-phosphate (route II): step 2/2. The protein operates within nucleotide-sugar biosynthesis; UDP-N-acetyl-alpha-D-glucosamine biosynthesis; UDP-N-acetyl-alpha-D-glucosamine from N-acetyl-alpha-D-glucosamine 1-phosphate: step 1/1. Its pathway is bacterial outer membrane biogenesis; LPS lipid A biosynthesis. Functionally, catalyzes the last two sequential reactions in the de novo biosynthetic pathway for UDP-N-acetylglucosamine (UDP-GlcNAc). The C-terminal domain catalyzes the transfer of acetyl group from acetyl coenzyme A to glucosamine-1-phosphate (GlcN-1-P) to produce N-acetylglucosamine-1-phosphate (GlcNAc-1-P), which is converted into UDP-GlcNAc by the transfer of uridine 5-monophosphate (from uridine 5-triphosphate), a reaction catalyzed by the N-terminal domain. This chain is Bifunctional protein GlmU, found in Erwinia tasmaniensis (strain DSM 17950 / CFBP 7177 / CIP 109463 / NCPPB 4357 / Et1/99).